Consider the following 726-residue polypeptide: Dipeptidyl-peptidase 5 (726 aa).

Residues 1 to 19 (MAAAKWLIASLAFASSGLA) form the signal peptide. 2 N-linked (GlcNAc...) asparagine glycosylation sites follow: N96 and N252. The disordered stretch occupies residues 269–291 (AEPINKRNGPRTPQAIEGASSSP). The active-site Charge relay system is S558. N605 carries an N-linked (GlcNAc...) asparagine glycan. Active-site charge relay system residues include D641 and H673. Residue N699 is glycosylated (N-linked (GlcNAc...) asparagine).

This sequence belongs to the peptidase S9C family.

The protein resides in the secreted. Functionally, extracellular dipeptidyl-peptidase which removes N-terminal dipeptides sequentially from polypeptides having unsubstituted N-termini. Contributes to pathogenicity. The protein is Dipeptidyl-peptidase 5 (DPP5) of Trichophyton equinum (Horse ringworm fungus).